A 201-amino-acid polypeptide reads, in one-letter code: Retinol binding protein 4 (201 aa).

A signal peptide spans 1–18 (MAWVWALVLLAALGSARA). 3 disulfide bridges follow: Cys22–Cys178, Cys88–Cys192, and Cys138–Cys147. A substrate-binding site is contributed by Gln116. Omega-N-methylarginine is present on Arg139.

It belongs to the calycin superfamily. Lipocalin family. Interacts with TTR. Interaction with TTR prevents its loss by filtration through the kidney glomeruli. Interacts with STRA6. Highly expressed in liver. Also expressed in adipose tissue. Expressed by endometrium from days 16-25 and by unattached chorioallantois from days 30-36 during pregnancy.

It is found in the secreted. Functionally, retinol-binding protein that mediates retinol transport in blood plasma. Delivers retinol from the liver stores to the peripheral tissues. Transfers the bound all-trans retinol to STRA6, that then facilitates retinol transport across the cell membrane. In Felis catus (Cat), this protein is Retinol binding protein 4.